We begin with the raw amino-acid sequence, 271 residues long: TIP41-like protein (271 aa).

Lysine 106 carries the post-translational modification N6-acetyllysine. The interaction with PPP2CA stretch occupies residues 173–271; the sequence is RVMPSSFFLL…PVDSESAPSE (99 aa). 2 positions are modified to phosphoserine: serine 265 and serine 270.

The protein belongs to the TIP41 family. As to quaternary structure, interacts with PPP2CA. Interacts with PPP2CB, PPP4C and PPP6C. Interacts with IGBP1; the interaction is dependent on PPP2CA. Associates with a protein phosphatase 2A PP2A(C):IGBP1 complex. Interacts with PPP4C and PPP4R2.

The protein localises to the cytoplasm. Functionally, may be a allosteric regulator of serine/threonine-protein phosphatase 2A (PP2A). Inhibits catalytic activity of the PP2A(D) core complex in vitro. The PP2A(C):TIPRL complex does not show phosphatase activity. Acts as a negative regulator of serine/threonine-protein phosphatase 4 probably by inhibiting the formation of the active PPP4C:PPP4R2 complex; the function is proposed to implicate it in DNA damage response by promoting H2AX phosphorylated on Ser-140 (gamma-H2AX). May play a role in the regulation of ATM/ATR signaling pathway controlling DNA replication and repair. The protein is TIP41-like protein (Tiprl) of Rattus norvegicus (Rat).